The primary structure comprises 382 residues: Gap junction alpha-1 protein (382 aa).

The Cytoplasmic portion of the chain corresponds to 2 to 23 (GDWSALGKLLDKVQAYSTAGGK). Ser-5 carries the post-translational modification Phosphoserine. A helical transmembrane segment spans residues 24 to 44 (VWLSVLFIFRILLLGTAVESA). Over 45–76 (WGDEQSAFRCNTQQPGCENVCYDKSFPISHVR) the chain is Extracellular. Disulfide bonds link Cys-54/Cys-192 and Cys-187/Cys-198. A helical membrane pass occupies residues 77 to 97 (FWVLQIIFVSVPTLLYLAHVF). At 98 to 155 (YVMRKEEKLNKKEEELKVAQTDGANVDMHLKQIEIKKFKYGIEEHGKVKMRGGLLRTY) the chain is on the cytoplasmic side. Lys-144 participates in a covalent cross-link: Glycyl lysine isopeptide (Lys-Gly) (interchain with G-Cter in SUMO). Residues 156 to 176 (IISILFKSVFEVAFLLIQWYI) traverse the membrane as a helical segment. Topologically, residues 177–207 (YGFSLSAVYTCKRDPCPHQVDCFLSRPTEKT) are extracellular. A helical membrane pass occupies residues 208 to 228 (IFIIFMLVVSLVSLALNIIEL). The Cytoplasmic segment spans residues 229-382 (FYVFFKGIKD…SRPRPDDLEI (154 aa)). Lys-237 is covalently cross-linked (Glycyl lysine isopeptide (Lys-Gly) (interchain with G-Cter in SUMO)). The tract at residues 244–382 (SDLYHATTGP…SRPRPDDLEI (139 aa)) is interaction with NOV. A Phosphotyrosine modification is found at Tyr-247. Phosphoserine occurs at positions 255, 257, and 262. Residues 264-382 (TYAYFNGCSS…SRPRPDDLEI (119 aa)) are interaction with UBQLN4. Residue Cys-271 is modified to S-nitrosocysteine. Thr-275 is subject to Phosphothreonine. Phosphoserine occurs at positions 306 and 314. Positions 317 to 332 (QNRMGQAGSTISNSHA) are enriched in polar residues. The tract at residues 317–382 (QNRMGQAGST…SRPRPDDLEI (66 aa)) is disordered. Phosphoserine; by CK1 is present on Ser-325. A Phosphothreonine modification is found at Thr-326. Residues Ser-328 and Ser-330 each carry the phosphoserine; by CK1 modification. Ser-344 and Ser-365 each carry phosphoserine. Positions 362 to 374 (RPSSRASSRASSR) are enriched in low complexity. Phosphoserine; by PKC/PRKCG and PKC/PRKCD is present on Ser-368. Ser-369 and Ser-373 each carry phosphoserine.

It belongs to the connexin family. Alpha-type (group II) subfamily. In terms of assembly, a connexon is composed of a hexamer of connexins. Interacts with SGSM3. Interacts with RIC1/CIP150. Interacts with CNST and CSNK1D. Interacts (via C-terminus) with TJP1. Interacts (via C-terminus) with SRC (via SH3 domain). Interacts (not ubiquitinated) with UBQLN4 (via UBA domain). Interacts with NOV. Interacts with TMEM65. Interacts with ANK3/ANKG and PKP2. Post-translationally, phosphorylation at Ser-325, Ser-328 and Ser-330 by CK1 modulates gap junction assembly. Phosphorylated at Ser-368 by PRKCG; phosphorylation induces disassembly of gap junction plaques and inhibition of gap junction activity. Phosphorylation at Ser-368 by PRKCD triggers its internalization into small vesicles leading to proteasome-mediated degradation. Sumoylated with SUMO1, SUMO2 and SUMO3, which may regulate the level of functional Cx43 gap junctions at the plasma membrane. May be desumoylated by SENP1 or SENP2. In terms of processing, S-nitrosylation at Cys-271 is enriched at the muscle endothelial gap junction in arteries, it augments channel permeability and may regulate of smooth muscle cell to endothelial cell communication. Post-translationally, acetylated in the developing cortex; leading to delocalization from the cell membrane.

The protein localises to the cell membrane. It is found in the cell junction. Its subcellular location is the gap junction. The protein resides in the endoplasmic reticulum. Its function is as follows. Gap junction protein that acts as a regulator of bladder capacity. A gap junction consists of a cluster of closely packed pairs of transmembrane channels, the connexons, through which materials of low MW diffuse from one cell to a neighboring cell. May play a critical role in the physiology of hearing by participating in the recycling of potassium to the cochlear endolymph. Negative regulator of bladder functional capacity: acts by enhancing intercellular electrical and chemical transmission, thus sensitizing bladder muscles to cholinergic neural stimuli and causing them to contract. May play a role in cell growth inhibition through the regulation of NOV expression and localization. Plays an essential role in gap junction communication in the ventricles. The chain is Gap junction alpha-1 protein (GJA1) from Erinaceus europaeus (Western European hedgehog).